A 130-amino-acid polypeptide reads, in one-letter code: Ribosome-binding factor A (130 aa).

It belongs to the RbfA family. Monomer. Binds 30S ribosomal subunits, but not 50S ribosomal subunits or 70S ribosomes.

The protein resides in the cytoplasm. In terms of biological role, one of several proteins that assist in the late maturation steps of the functional core of the 30S ribosomal subunit. Associates with free 30S ribosomal subunits (but not with 30S subunits that are part of 70S ribosomes or polysomes). Required for efficient processing of 16S rRNA. May interact with the 5'-terminal helix region of 16S rRNA. The chain is Ribosome-binding factor A from Lachnospira eligens (strain ATCC 27750 / DSM 3376 / VPI C15-48 / C15-B4) (Eubacterium eligens).